The primary structure comprises 466 residues: Fumarate hydratase class II (466 aa).

Residues 100–102 (SGT), Arg-128, 131–134 (HPND), 141–143 (SSN), and Thr-189 each bind substrate. Basic and acidic residues predominate over residues 122 to 137 (GERGERRKVHPNDDVN). The disordered stretch occupies residues 122–143 (GERGERRKVHPNDDVNKGQSSN). The Proton donor/acceptor role is filled by His-190. The active site involves Ser-320. Residues Ser-321 and 326–328 (KVN) contribute to the substrate site.

Belongs to the class-II fumarase/aspartase family. Fumarase subfamily. As to quaternary structure, homotetramer.

Its subcellular location is the cytoplasm. The enzyme catalyses (S)-malate = fumarate + H2O. It participates in carbohydrate metabolism; tricarboxylic acid cycle; (S)-malate from fumarate: step 1/1. Its function is as follows. Involved in the TCA cycle. Catalyzes the stereospecific interconversion of fumarate to L-malate. The sequence is that of Fumarate hydratase class II from Myxococcus xanthus (strain DK1622).